The following is a 187-amino-acid chain: UPF0301 protein VP2612 (187 aa).

The protein belongs to the UPF0301 (AlgH) family.

This Vibrio parahaemolyticus serotype O3:K6 (strain RIMD 2210633) protein is UPF0301 protein VP2612.